Here is a 476-residue protein sequence, read N- to C-terminus: Vitamin D-binding protein (476 aa).

A signal peptide spans 1–16; it reads MKRVLVLLLALAFGHA. Albumin domains follow at residues 17-208, 209-394, and 395-476; these read LERG…QMKQ, LLLL…LMKR, and QLTS…ILQS. Cystine bridges form between C29-C75, C74-C83, C96-C112, C111-C122, C145-C190, C189-C198, C220-C266, C265-C273, C286-C300, C299-C311, C335-C376, C375-C384, C407-C453, and C452-C462. The N-linked (GlcNAc...) asparagine glycan is linked to N288. S434 carries the post-translational modification Phosphoserine.

The protein belongs to the ALB/AFP/VDB family. In terms of assembly, associates with membrane-bound immunoglobulin on the surface of B-lymphocytes and with IgG Fc receptor on the membranes of T-lymphocytes. Interacts with LRP2; the interaction is required for renal uptake of GC in complex with 25-hydroxyvitamin D3.

The protein localises to the secreted. Functionally, involved in vitamin D transport and storage, scavenging of extracellular G-actin, enhancement of the chemotactic activity of C5 alpha for neutrophils in inflammation and macrophage activation. The chain is Vitamin D-binding protein (Gc) from Rattus norvegicus (Rat).